The chain runs to 268 residues: Helix-loop-helix protein 25 (268 aa).

Residues 1 to 23 (MPKVIQSSMSDYRSVPYNQTPKS) show a composition bias toward polar residues. Residues 1–29 (MPKVIQSSMSDYRSVPYNQTPKSASERKR) form a disordered region. The tract at residues 92 to 105 (ERRKVKTEREKIRR) is basic motif. One can recognise a bHLH domain in the interval 92 to 149 (ERRKVKTEREKIRRKKQDDCYAELKFFILNKQMGSYEQRLKLERITILEIIIDYIKHN). The segment at 106–149 (KKQDDCYAELKFFILNKQMGSYEQRLKLERITILEIIIDYIKHN) is helix-loop-helix motif.

It localises to the nucleus. Functionally, probable transcription factor. Modulates lifespan and also recovery from the developmentally arrested larval state known as dauer, perhaps acting upstream of phosphatase PTEN/daf-18. Regulates expression of genes involved in cell division, cell-cycle regulation, and sexual reproduction, including daf-18. This chain is Helix-loop-helix protein 25, found in Caenorhabditis elegans.